We begin with the raw amino-acid sequence, 311 residues long: Methionyl-tRNA formyltransferase (311 aa).

109–112 is a (6S)-5,6,7,8-tetrahydrofolate binding site; that stretch reads SLLP.

Belongs to the Fmt family.

It catalyses the reaction L-methionyl-tRNA(fMet) + (6R)-10-formyltetrahydrofolate = N-formyl-L-methionyl-tRNA(fMet) + (6S)-5,6,7,8-tetrahydrofolate + H(+). Attaches a formyl group to the free amino group of methionyl-tRNA(fMet). The formyl group appears to play a dual role in the initiator identity of N-formylmethionyl-tRNA by promoting its recognition by IF2 and preventing the misappropriation of this tRNA by the elongation apparatus. The sequence is that of Methionyl-tRNA formyltransferase from Solibacter usitatus (strain Ellin6076).